Here is a 305-residue protein sequence, read N- to C-terminus: Putative S-adenosyl-L-methionine-dependent methyltransferase Mvan_1344 (305 aa).

Residues aspartate 130 and 159–160 contribute to the S-adenosyl-L-methionine site; that span reads DL.

It belongs to the UPF0677 family.

In terms of biological role, exhibits S-adenosyl-L-methionine-dependent methyltransferase activity. The protein is Putative S-adenosyl-L-methionine-dependent methyltransferase Mvan_1344 of Mycolicibacterium vanbaalenii (strain DSM 7251 / JCM 13017 / BCRC 16820 / KCTC 9966 / NRRL B-24157 / PYR-1) (Mycobacterium vanbaalenii).